We begin with the raw amino-acid sequence, 238 residues long: tRNA (guanine-N(7)-)-methyltransferase (238 aa).

Glu68, Glu93, Asp120, and Asp143 together coordinate S-adenosyl-L-methionine. Residue Asp143 is part of the active site. Residues Lys147, Asp179, and 216–219 (TKFE) contribute to the substrate site.

The protein belongs to the class I-like SAM-binding methyltransferase superfamily. TrmB family.

The catalysed reaction is guanosine(46) in tRNA + S-adenosyl-L-methionine = N(7)-methylguanosine(46) in tRNA + S-adenosyl-L-homocysteine. Its pathway is tRNA modification; N(7)-methylguanine-tRNA biosynthesis. Functionally, catalyzes the formation of N(7)-methylguanine at position 46 (m7G46) in tRNA. The polypeptide is tRNA (guanine-N(7)-)-methyltransferase (Shewanella amazonensis (strain ATCC BAA-1098 / SB2B)).